The primary structure comprises 534 residues: BEN domain-containing protein 4 (534 aa).

Disordered stretches follow at residues 1-24 (MEEE…RSPY), 48-128 (ELPH…AASS), and 287-322 (VHTL…EEGY). The segment covering 53 to 63 (RAPPPPPPPFA) has biased composition (pro residues). Residues 69 to 83 (SISSSEPPPQQFQAQ) are compositionally biased toward polar residues. Residues 91–109 (GRAAAAASSSSPSCTPATS) are compositionally biased toward low complexity. The segment covering 295-310 (SPATSESHGHPSSSTL) has biased composition (polar residues). The segment covering 311–321 (PEEEEEEDEEG) has biased composition (acidic residues). Positions 324 to 351 (PRCQELEQEVISLQQENEELRRKLESIP) form a coiled coil. One can recognise a BEN domain in the interval 390-498 (NYPVYITSKQ…DAVGHARQGR (109 aa)).

In Homo sapiens (Human), this protein is BEN domain-containing protein 4 (BEND4).